The sequence spans 380 residues: Epoxyqueuosine reductase (380 aa).

Aspartate 134 serves as the catalytic Proton donor. The 4Fe-4S ferredoxin-type 1 domain occupies 179 to 208 (PPDQPIEDQCGSCTKCIDICPTGALIQGGQ). Residues cysteine 188, cysteine 191, cysteine 194, cysteine 198, cysteine 214, cysteine 240, cysteine 243, and cysteine 247 each coordinate [4Fe-4S] cluster. Residues 226–258 (PEEYRDKIGNRIYGCDTCQTVCPKNKGMDFHNH) enclose the 4Fe-4S ferredoxin-type 2 domain.

The protein belongs to the QueG family. As to quaternary structure, monomer. Cob(II)alamin is required as a cofactor. The cofactor is [4Fe-4S] cluster.

The protein localises to the cytoplasm. It carries out the reaction epoxyqueuosine(34) in tRNA + AH2 = queuosine(34) in tRNA + A + H2O. It participates in tRNA modification; tRNA-queuosine biosynthesis. Functionally, catalyzes the conversion of epoxyqueuosine (oQ) to queuosine (Q), which is a hypermodified base found in the wobble positions of tRNA(Asp), tRNA(Asn), tRNA(His) and tRNA(Tyr). The polypeptide is Epoxyqueuosine reductase (Bacillus anthracis).